The primary structure comprises 200 residues: Large ribosomal subunit protein uL29 (200 aa).

Residues 1–107 (MTIAKELKQK…KQETKKAEVK (107 aa)) form a large ribosomal subunit protein uL29 region. Residues 92–200 (STKPESKQET…KMIKTKEKKQ (109 aa)) form a disordered region. Residues 93 to 179 (TKPESKQETK…QEVKKVEAKK (87 aa)) are compositionally biased toward basic and acidic residues. A unknown region spans residues 108–200 (PKVESKPESK…KMIKTKEKKQ (93 aa)). The span at 186 to 200 (KPVKAKMIKTKEKKQ) shows a compositional bias: basic residues.

The protein belongs to the universal ribosomal protein uL29 family.

The chain is Large ribosomal subunit protein uL29 from Mycoplasma genitalium (strain ATCC 33530 / DSM 19775 / NCTC 10195 / G37) (Mycoplasmoides genitalium).